A 355-amino-acid chain; its full sequence is Peptide chain release factor 1 (355 aa).

At Q231 the chain carries N5-methylglutamine. Positions 283 to 292 (IAKETSERKS) are enriched in basic and acidic residues. Residues 283–303 (IAKETSERKSQVGTGDRSGRI) are disordered.

It belongs to the prokaryotic/mitochondrial release factor family. In terms of processing, methylated by PrmC. Methylation increases the termination efficiency of RF1.

The protein resides in the cytoplasm. In terms of biological role, peptide chain release factor 1 directs the termination of translation in response to the peptide chain termination codons UAG and UAA. This is Peptide chain release factor 1 from Campylobacter curvus (strain 525.92).